The sequence spans 713 residues: Polyribonucleotide nucleotidyltransferase (713 aa).

Mg(2+) is bound by residues aspartate 487 and aspartate 493. The region spanning 554 to 613 (PRIEVMNIPVDKIREVIGSGGKVIREIVEKTGAKINIEDDGTVKIASASGKEIEAARKWI) is the KH domain. Residues 623–691 (GQIYEGTVVK…ERGKVRLSMK (69 aa)) form the S1 motif domain.

The protein belongs to the polyribonucleotide nucleotidyltransferase family. It depends on Mg(2+) as a cofactor.

It localises to the cytoplasm. It carries out the reaction RNA(n+1) + phosphate = RNA(n) + a ribonucleoside 5'-diphosphate. Functionally, involved in mRNA degradation. Catalyzes the phosphorolysis of single-stranded polyribonucleotides processively in the 3'- to 5'-direction. This chain is Polyribonucleotide nucleotidyltransferase, found in Agrobacterium fabrum (strain C58 / ATCC 33970) (Agrobacterium tumefaciens (strain C58)).